The chain runs to 406 residues: UPF0754 membrane protein Cyan7425_4067 (406 aa).

A helical membrane pass occupies residues 381 to 401 (IVTLGGVLGLLIGIAQSVLLL).

This sequence belongs to the UPF0754 family.

It localises to the cell inner membrane. This is UPF0754 membrane protein Cyan7425_4067 from Cyanothece sp. (strain PCC 7425 / ATCC 29141).